Reading from the N-terminus, the 476-residue chain is MFDVIVVGGGPTGLMLAGELRLHGVRVLVLEKETEPTRQSRAQGLHVRSIEVMAQRGLLERFLERGHTVAVGGFFAGLATSWPERLDTAHSYVLAVPQVITEQLLAEHATALGAEIRRGRALVGLRQDEDGVTVDLADGEQLRARYVVGCDGGRSTVRKLLGVAFPGEPSRVETLLGEMEMTASQEELTSVMTEVRKTQQRFGAMPLGDGVFRVVVPAEGVAEDRTASPTLDEFKQQLRAHAGTDFGVHSPRWLSRFGDATRQAERYRVDRVFLAGDAAHIHPPTGGQGLNLGIQDAFNLGWKLAAEVDGWAPEGLLDTYHAERHPVATEVLDNTRAQIQLMSTEPGPQAVRRLMAELVEFENVNRYLIEKITAISVRYDVGEGHELLGRRMRDLALKHGRLYERMHEGRGLLLDQTGRLSVAGWEDRVDHVVEVSEELDVPAVLLRPDGHVVWAGEDQQELLTRMPAWFGAATAG.

Residues Thr12, Glu31, Lys32, Gln98, Leu122, and Thr156 each coordinate FAD. 2 residues coordinate rifampicin: Arg196 and Arg213. FAD-binding residues include Asp277, Leu290, and Asn291.

Belongs to the rifampicin monooxygenase family. FAD is required as a cofactor.

It carries out the reaction rifampicin + NADPH + O2 = rifampicin para-naphthoquinone carboxamide + NADP(+) + H2O + H(+). It catalyses the reaction rifampicin + NADH + O2 = rifampicin para-naphthoquinone carboxamide + NAD(+) + H2O + H(+). The enzyme catalyses rifamycin SV + NADPH + O2 = rifamycin SV para-naphthoquinone carboxamide + NADP(+) + H2O. The catalysed reaction is rifamycin SV + NADH + O2 = rifamycin SV para-naphthoquinone carboxamide + NAD(+) + H2O. Its function is as follows. Monooxygenase that can modify rifampicin, thereby inactivating its antibiotic activity. Inactivates a broad range of rifamycin antibiotics. In Streptomyces venezuelae (strain ATCC 10712 / CBS 650.69 / DSM 40230 / JCM 4526 / NBRC 13096 / PD 04745), this protein is Rifampicin monooxygenase.